Consider the following 507-residue polypeptide: ATP synthase subunit alpha, chloroplastic (507 aa).

170-177 is a binding site for ATP; the sequence is GDRQTGKT.

The protein belongs to the ATPase alpha/beta chains family. In terms of assembly, F-type ATPases have 2 components, CF(1) - the catalytic core - and CF(0) - the membrane proton channel. CF(1) has five subunits: alpha(3), beta(3), gamma(1), delta(1), epsilon(1). CF(0) has four main subunits: a, b, b' and c.

It localises to the plastid. Its subcellular location is the chloroplast thylakoid membrane. The enzyme catalyses ATP + H2O + 4 H(+)(in) = ADP + phosphate + 5 H(+)(out). Produces ATP from ADP in the presence of a proton gradient across the membrane. The alpha chain is a regulatory subunit. This chain is ATP synthase subunit alpha, chloroplastic, found in Eucalyptus globulus subsp. globulus (Tasmanian blue gum).